A 274-amino-acid chain; its full sequence is MNKTAIALLALLASSASLAATPWQKITQPVPGSAQSIGSFSNGCIVGADTLPIQSEHYQVMRTDQRRYFGHPDLVMFIQRLSSQVSNLSLGTVLIGDMGMPAGGRFNGGHASHQTGLDVDIFLQLPKTRWTSAQLLRPQALDLVSRDGKHVVPTLWKPEIFSLIKLAAQDKDVTRIFVNPAIKQQLCLDAGTDRDWLRKVRPWFQHRAHMHVRLRCPADSLECEDQPLPPPGDGCGAELQSWFEPPKPGTTKPEKKTPPPLPPSCQALLDEHVI.

The signal sequence occupies residues 1–19; sequence MNKTAIALLALLASSASLA. 3 disulfides stabilise this stretch: Cys-44–Cys-265, Cys-187–Cys-235, and Cys-216–Cys-223. Zn(2+) is bound by residues His-110, His-113, Asp-120, Asp-147, His-150, and His-211. The disordered stretch occupies residues 227 to 274; it reads PLPPPGDGCGAELQSWFEPPKPGTTKPEKKTPPPLPPSCQALLDEHVI.

This sequence belongs to the peptidase M74 family. In terms of assembly, dimer. Zn(2+) serves as cofactor.

The protein localises to the periplasm. In terms of biological role, murein endopeptidase that cleaves the D-alanyl-meso-2,6-diamino-pimelyl amide bond that connects peptidoglycan strands. Likely plays a role in the removal of murein from the sacculus. The protein is Penicillin-insensitive murein endopeptidase of Escherichia coli O17:K52:H18 (strain UMN026 / ExPEC).